Reading from the N-terminus, the 165-residue chain is MATETNKELFVGGFAKILKEQRQVDVRLKAGDSGDEGASTSAHKLVLSARSEVFKKMLESDEIKASAQLETITLCEMKHEELEAFIEFIYSDGSMLSAKEKQHVRSLYIAGDKYEIPHLRDLCRIELISSLKSSNALDILELAQIPFDKALHDSAFFFFFFFFFG.

Residues 24-98 enclose the BTB domain; that stretch reads VDVRLKAGDS…IYSDGSMLSA (75 aa).

It functions in the pathway protein modification; protein ubiquitination. May act as a substrate-specific adapter of an E3 ubiquitin-protein ligase complex (CUL3-RBX1-BTB) which mediates the ubiquitination and subsequent proteasomal degradation of target proteins. This is Putative BTB/POZ domain-containing protein At2g40440 from Arabidopsis thaliana (Mouse-ear cress).